Here is a 32-residue protein sequence, read N- to C-terminus: Tail virion protein G9P (32 aa).

Residues Phe-8–Phe-24 form a helical membrane-spanning segment.

Belongs to the inovirus G9P protein family.

Its subcellular location is the virion. The protein resides in the host membrane. May initiate with G7P the virion concomitant assembly-budding process, by interacting with the packaging signal of the viral genome. The assembly-budding takes place at the host inner membrane. In turn, G7P and G9P are present at the end of the filamentous virion that emerges first from the bacterial host. In Escherichia coli (Bacteriophage f1), this protein is Tail virion protein G9P (IX).